We begin with the raw amino-acid sequence, 745 residues long: Elongation factor G, mitochondrial (745 aa).

The 278-residue stretch at 40–317 folds into the tr-type G domain; that stretch reads ERIRNIGISA…AVLDYLPNPG (278 aa). Residues 49–56, 116–120, and 170–173 contribute to the GTP site; these read AHIDSGKT, DTPGH, and NKLD.

It belongs to the TRAFAC class translation factor GTPase superfamily. Classic translation factor GTPase family. EF-G/EF-2 subfamily.

Its subcellular location is the mitochondrion. It participates in protein biosynthesis; polypeptide chain elongation. Mitochondrial GTPase that catalyzes the GTP-dependent ribosomal translocation step during translation elongation. During this step, the ribosome changes from the pre-translocational (PRE) to the post-translocational (POST) state as the newly formed A-site-bound peptidyl-tRNA and P-site-bound deacylated tRNA move to the P and E sites, respectively. Catalyzes the coordinated movement of the two tRNA molecules, the mRNA and conformational changes in the ribosome. Essential during development as it acts as a retrograde signal from mitochondria to the nucleus to slow down cell proliferation if mitochondrial energy output is low. This chain is Elongation factor G, mitochondrial, found in Drosophila yakuba (Fruit fly).